Here is a 177-residue protein sequence, read N- to C-terminus: Ubiquinol-cytochrome c reductase iron-sulfur subunit (177 aa).

A helical membrane pass occupies residues 18–38 (MVLTASSVAAIGAVCTLWPLV). In terms of domain architecture, Rieske spans 88 to 175 (ARAVKMSELI…YTFISDKKIR (88 aa)). Positions 120, 122, 139, and 142 each coordinate [2Fe-2S] cluster. Cysteine 125 and cysteine 141 form a disulfide bridge.

It belongs to the Rieske iron-sulfur protein family. As to quaternary structure, the main subunits of complex b-c1 are: cytochrome b, cytochrome c1 and the Rieske protein. The cofactor is [2Fe-2S] cluster.

The protein localises to the cell membrane. The catalysed reaction is a quinol + 2 Fe(III)-[cytochrome c](out) = a quinone + 2 Fe(II)-[cytochrome c](out) + 2 H(+)(out). Component of the ubiquinol-cytochrome c reductase complex (complex III or cytochrome b-c1 complex), which is a respiratory chain that generates an electrochemical potential coupled to ATP synthesis. The polypeptide is Ubiquinol-cytochrome c reductase iron-sulfur subunit (petA) (Rickettsia conorii (strain ATCC VR-613 / Malish 7)).